A 294-amino-acid chain; its full sequence is Cytidine deaminase (294 aa).

2 CMP/dCMP-type deaminase domains span residues 48 to 168 (DEDA…FGPK) and 186 to 294 (LTGD…VLLA). Substrate is bound at residue 89-91 (NME). Residue H102 participates in Zn(2+) binding. E104 acts as the Proton donor in catalysis. C129 and C132 together coordinate Zn(2+).

It belongs to the cytidine and deoxycytidylate deaminase family. Homodimer. Zn(2+) serves as cofactor.

The catalysed reaction is cytidine + H2O + H(+) = uridine + NH4(+). The enzyme catalyses 2'-deoxycytidine + H2O + H(+) = 2'-deoxyuridine + NH4(+). Functionally, this enzyme scavenges exogenous and endogenous cytidine and 2'-deoxycytidine for UMP synthesis. The chain is Cytidine deaminase from Escherichia coli O139:H28 (strain E24377A / ETEC).